The primary structure comprises 328 residues: Flap endonuclease 1 (328 aa).

The N-domain stretch occupies residues 1-98; it reads MGVKFKDITN…ETQEERINIK (98 aa). Mg(2+)-binding residues include aspartate 27, aspartate 80, glutamate 152, glutamate 154, aspartate 173, aspartate 175, and aspartate 227. Positions 116–248 are I-domain; the sequence is AARKYAARTT…KGIKLIHKYG (133 aa). The tract at residues 320 to 328 is interaction with PCNA; it reads AQSSLEDWF.

This sequence belongs to the XPG/RAD2 endonuclease family. FEN1 subfamily. As to quaternary structure, interacts with PCNA. PCNA stimulates the nuclease activity without altering cleavage specificity. Mg(2+) is required as a cofactor.

Structure-specific nuclease with 5'-flap endonuclease and 5'-3' exonuclease activities involved in DNA replication and repair. During DNA replication, cleaves the 5'-overhanging flap structure that is generated by displacement synthesis when DNA polymerase encounters the 5'-end of a downstream Okazaki fragment. Binds the unpaired 3'-DNA end and kinks the DNA to facilitate 5' cleavage specificity. Cleaves one nucleotide into the double-stranded DNA from the junction in flap DNA, leaving a nick for ligation. Also involved in the base excision repair (BER) pathway. Acts as a genome stabilization factor that prevents flaps from equilibrating into structures that lead to duplications and deletions. Also possesses 5'-3' exonuclease activity on nicked or gapped double-stranded DNA. The sequence is that of Flap endonuclease 1 from Methanosphaera stadtmanae (strain ATCC 43021 / DSM 3091 / JCM 11832 / MCB-3).